The chain runs to 354 residues: S-adenosylmethionine:tRNA ribosyltransferase-isomerase (354 aa).

Belongs to the QueA family. In terms of assembly, monomer.

Its subcellular location is the cytoplasm. The enzyme catalyses 7-aminomethyl-7-carbaguanosine(34) in tRNA + S-adenosyl-L-methionine = epoxyqueuosine(34) in tRNA + adenine + L-methionine + 2 H(+). The protein operates within tRNA modification; tRNA-queuosine biosynthesis. Transfers and isomerizes the ribose moiety from AdoMet to the 7-aminomethyl group of 7-deazaguanine (preQ1-tRNA) to give epoxyqueuosine (oQ-tRNA). The chain is S-adenosylmethionine:tRNA ribosyltransferase-isomerase from Salmonella heidelberg (strain SL476).